Reading from the N-terminus, the 134-residue chain is Small ribosomal subunit protein uS11 (134 aa).

It belongs to the universal ribosomal protein uS11 family. Component of the small ribosomal subunit.

The protein resides in the cytoplasm. This is Small ribosomal subunit protein uS11 (RPS14) from Encephalitozoon cuniculi (strain GB-M1) (Microsporidian parasite).